The following is a 249-amino-acid chain: DNA polymerase sliding clamp (249 aa).

It belongs to the PCNA family. As to quaternary structure, homotrimer. The subunits circularize to form a toroid; DNA passes through its center. Replication factor C (RFC) is required to load the toroid on the DNA.

In terms of biological role, sliding clamp subunit that acts as a moving platform for DNA processing. Responsible for tethering the catalytic subunit of DNA polymerase and other proteins to DNA during high-speed replication. This is DNA polymerase sliding clamp from Thermococcus sibiricus (strain DSM 12597 / MM 739).